Consider the following 87-residue polypeptide: Antitoxin RelB1 (87 aa).

Its function is as follows. Antitoxin component of a type II toxin-antitoxin (TA) system. Neutralizes the effect of cognate toxin RelE1, but no other RelE or ParE toxin. The chain is Antitoxin RelB1 (relB1) from Caulobacter vibrioides (strain ATCC 19089 / CIP 103742 / CB 15) (Caulobacter crescentus).